Reading from the N-terminus, the 464-residue chain is MAGGAVMTSTPTKPTVAFAHLGCEKNRVDTEHMVGLLAQAGYGVSTNENDAAVVVVNTCSFIQDAREESVRTLVGLAEQGKELIIAGCLAQHFQDELLESIPEAKAIVGTGDYQHIVEVLQRVEAGERVNRVSAVPTFVGDEHLPRQRTTDQAVAFLKVAEGCDYRCAFCIIPKLRGDQRSRPIESIVAEAHQLVEQGVQELILISQITTNYGLDLYGKPKLAELLRALGEVEIPWIRVHYAYPTGLTPEVLAAYREVPNVVPYLDLPLQHSHPEVLRAMNRPWQADVNDRLLDQIRDQLPDAVLRTTLIVGFPGETEEHFQHLMEFLRRQRFDHVGVFTFSPEDGTAAAELPNPVDPDVAQARKDALMALQQPISAERNHSWVSRTVDVLIEQHNPQTGQMIGRCARFAPEVDGEVHVQPGEDGQKAAPGTMVPVQITGADVYDLSGRIVGARDMVAAIRADA.

In terms of domain architecture, MTTase N-terminal spans 14-125 (PTVAFAHLGC…IVEVLQRVEA (112 aa)). Positions 23, 59, 88, 163, 167, and 170 each coordinate [4Fe-4S] cluster. Positions 149-378 (TTDQAVAFLK…MALQQPISAE (230 aa)) constitute a Radical SAM core domain. Positions 381–452 (HSWVSRTVDV…VYDLSGRIVG (72 aa)) constitute a TRAM domain.

This sequence belongs to the methylthiotransferase family. RimO subfamily. It depends on [4Fe-4S] cluster as a cofactor.

It is found in the cytoplasm. The enzyme catalyses L-aspartate(89)-[ribosomal protein uS12]-hydrogen + (sulfur carrier)-SH + AH2 + 2 S-adenosyl-L-methionine = 3-methylsulfanyl-L-aspartate(89)-[ribosomal protein uS12]-hydrogen + (sulfur carrier)-H + 5'-deoxyadenosine + L-methionine + A + S-adenosyl-L-homocysteine + 2 H(+). Functionally, catalyzes the methylthiolation of an aspartic acid residue of ribosomal protein uS12. The protein is Ribosomal protein uS12 methylthiotransferase RimO of Parasynechococcus marenigrum (strain WH8102).